We begin with the raw amino-acid sequence, 141 residues long: Hemoglobin subunit alpha-D (141 aa).

The 141-residue stretch at 1–141 (MLGAEETALV…VAAVLAEKYR (141 aa)) folds into the Globin domain. The heme b site is built by His-58 and His-87.

It belongs to the globin family. In terms of assembly, heterotetramer of two alpha-D chains and two beta chains. As to expression, red blood cells.

In terms of biological role, involved in oxygen transport from the lung to the various peripheral tissues. This Phalacrocorax carbo (Great cormorant) protein is Hemoglobin subunit alpha-D (HBAD).